A 514-amino-acid polypeptide reads, in one-letter code: Efflux pump aflT (514 aa).

10 helical membrane-spanning segments follow: residues 13–33, 61–81, 85–105, 116–136, 146–166, 174–194, 218–238, 247–267, 289–309, and 321–341; these read ISGM…FCVA, SAYL…YALF, WVFL…GVAP, IAGV…AHIV, GLLG…GGAF, WCFY…LFLL, GTIV…WGGV, IIAL…IQVL, VFVF…PIWF, and GIDS…SGAV. The N-linked (GlcNAc...) asparagine glycan is linked to Asn343. Transmembrane regions (helical) follow at residues 351–371, 378–398, 411–431, and 485–505; these read WFIV…LFTV, WIGF…QGAV, IGTA…TSVA, and LDVF…AVGI.

Belongs to the major facilitator superfamily. TCR/Tet family.

It is found in the cell membrane. Efflux pump; part of the gene cluster that mediates the biosynthesis of aflatoxins. This chain is Efflux pump aflT, found in Aspergillus parasiticus (strain ATCC 56775 / NRRL 5862 / SRRC 143 / SU-1).